Reading from the N-terminus, the 219-residue chain is MEKLIVGTLLLTVLSGGISQSDMDGKAFIFPQESSTAYVSLIPRVKKSLQNFTLCLKAFTDLTRPYSIFSYNTKTQDNEILLFVQNSGEYMFYVGNSAAIFKAPTSLYDPVHICVNWESASGIAEFWLNGKPLGRKGLKKGYTVGGEAKIIIGQEQDSFGGNFDAKQSFVGEIWDVSLWDHVIPLEEAHDSCDGGNLINFRALTYEENGYVVTKPKLWT.

Residues 1-19 form the signal peptide; the sequence is MEKLIVGTLLLTVLSGGIS. The Pentraxin (PTX) domain occupies 24 to 219; sequence DGKAFIFPQE…YVVTKPKLWT (196 aa). An intrachain disulfide couples cysteine 55 to cysteine 114. Ca(2+)-binding residues include aspartate 77, asparagine 78, glutamate 155, glutamine 156, aspartate 157, and glutamine 167.

This sequence belongs to the pentraxin family. Homopentamer. Pentraxin (or pentaxin) have a discoid arrangement of 5 non-covalently bound subunits. The cofactor is Ca(2+). As to expression, expression is restricted to small intestine, stomach and colon. Within colon, expressed in epithelial cells located within the lower to mid region of transverse and distal crypts, but not in proximal colon.

The protein resides in the secreted. The chain is Mucosal pentraxin (Mptx1) from Rattus norvegicus (Rat).